A 447-amino-acid chain; its full sequence is Probable 3-deoxy-D-manno-octulosonic acid transferase, mitochondrial (447 aa).

The transit peptide at 1–32 directs the protein to the mitochondrion; that stretch reads MKLGVFVYRLYRALTYGVSPLIHLHIRWRRLR. The active-site Proton acceptor is glutamate 66. Residues 278–279, 320–322, and 347–350 contribute to the CMP site; these read PR, LGE, and NLSE.

It belongs to the glycosyltransferase group 1 family. Glycosyltransferase 30 subfamily. As to expression, expressed in leaves, stems and flowers.

Its subcellular location is the mitochondrion. The enzyme catalyses lipid IVA (E. coli) + CMP-3-deoxy-beta-D-manno-octulosonate = alpha-Kdo-(2-&gt;6)-lipid IVA (E. coli) + CMP + H(+). It catalyses the reaction alpha-Kdo-(2-&gt;6)-lipid IVA (E. coli) + CMP-3-deoxy-beta-D-manno-octulosonate = alpha-Kdo-(2-&gt;4)-alpha-Kdo-(2-&gt;6)-lipid IVA (E. coli) + CMP + H(+). It functions in the pathway glycolipid biosynthesis; KDO(2)-lipid A biosynthesis; KDO(2)-lipid A from CMP-3-deoxy-D-manno-octulosonate and lipid IV(A): step 1/4. Its pathway is glycolipid biosynthesis; KDO(2)-lipid A biosynthesis; KDO(2)-lipid A from CMP-3-deoxy-D-manno-octulosonate and lipid IV(A): step 2/4. Its function is as follows. Involved in the biosynthesis of lipid A, a phosphorylated glycolipid that in bacteria anchors the lipopolysaccharide to the outer membrane of the cell. Catalyzes the transfer of two 3-deoxy-D-manno-octulosonate (Kdo) residues from CMP-Kdo to lipid IV(A), the tetraacyldisaccharide-1,4'-bisphosphate precursor of lipid A. Lipid A-like molecules in plants may serve as structural components of the outer membranes of mitochondria and/or chloroplasts, or may be involved in signal transduction or plant defense responses. The protein is Probable 3-deoxy-D-manno-octulosonic acid transferase, mitochondrial (KDTA) of Arabidopsis thaliana (Mouse-ear cress).